The primary structure comprises 484 residues: UDP-N-acetylmuramoyl-L-alanyl-D-glutamate--2,6-diaminopimelate ligase (484 aa).

S29 contacts UDP-N-acetyl-alpha-D-muramoyl-L-alanyl-D-glutamate. 108–114 (GTSGKTS) is an ATP binding site. UDP-N-acetyl-alpha-D-muramoyl-L-alanyl-D-glutamate contacts are provided by residues 150-151 (TT), S177, Q183, and R185. The residue at position 217 (K217) is an N6-carboxylysine. Meso-2,6-diaminopimelate-binding positions include R381, 405-408 (DNPR), G453, and E457. The short motif at 405 to 408 (DNPR) is the Meso-diaminopimelate recognition motif element.

Belongs to the MurCDEF family. MurE subfamily. Mg(2+) is required as a cofactor. Post-translationally, carboxylation is probably crucial for Mg(2+) binding and, consequently, for the gamma-phosphate positioning of ATP.

The protein resides in the cytoplasm. The enzyme catalyses UDP-N-acetyl-alpha-D-muramoyl-L-alanyl-D-glutamate + meso-2,6-diaminopimelate + ATP = UDP-N-acetyl-alpha-D-muramoyl-L-alanyl-gamma-D-glutamyl-meso-2,6-diaminopimelate + ADP + phosphate + H(+). It participates in cell wall biogenesis; peptidoglycan biosynthesis. In terms of biological role, catalyzes the addition of meso-diaminopimelic acid to the nucleotide precursor UDP-N-acetylmuramoyl-L-alanyl-D-glutamate (UMAG) in the biosynthesis of bacterial cell-wall peptidoglycan. This is UDP-N-acetylmuramoyl-L-alanyl-D-glutamate--2,6-diaminopimelate ligase from Mesorhizobium japonicum (strain LMG 29417 / CECT 9101 / MAFF 303099) (Mesorhizobium loti (strain MAFF 303099)).